Consider the following 269-residue polypeptide: Gap junction gamma-3 protein (269 aa).

Residues 1–33 (MLLLELPIKCRMCGRFLRQLLAQESQHSTPVGR) are Extracellular-facing. A helical transmembrane segment spans residues 34-54 (FLLPMLMGFRLLILVSSGPGV). The Cytoplasmic segment spans residues 55-86 (FGNDENEFICHLGQPGCKTICYDVFRPLSPLR). Residues 87–107 (FWAFQVILMAVPSAIYVAFTL) form a helical membrane-spanning segment. The Extracellular segment spans residues 108-145 (YHVIGYWEVPGKENKEQETQISKGDHSKDVSGAKSLKL). The helical transmembrane segment at 146–166 (LWAYVAHLGVRLALEGAALGV) threads the bilayer. At 167–205 (QYNLYGFKMSSTFICREDPCIGSTTCFQSHPSEKTIFLN) the chain is on the cytoplasmic side. A helical membrane pass occupies residues 206 to 226 (IMFGISGACFLFIFLELALLG). Topologically, residues 227-269 (LGRFWRIYKHKLSFLKKLPTSESSVRSKDTTDELSVVEAKEPF) are extracellular. At Ser261 the chain carries Phosphoserine.

Belongs to the connexin family. Gamma-type subfamily. A connexon is composed of a hexamer of connexins. As to expression, CNS specific. Expression is restricted to brain, spinal cord, and sciatic nerve.

It localises to the cell membrane. The protein localises to the cell junction. It is found in the gap junction. In terms of biological role, one gap junction consists of a cluster of closely packed pairs of transmembrane channels, the connexons, through which materials of low MW diffuse from one cell to a neighboring cell. The chain is Gap junction gamma-3 protein (Gjc3) from Mus musculus (Mouse).